Here is a 64-residue protein sequence, read N- to C-terminus: Large ribosomal subunit protein bL35 (64 aa).

Positions 1–26 are enriched in basic residues; the sequence is MPKIKTHRGAAKRFKKTGTGKIKRSK. Positions 1–48 are disordered; it reads MPKIKTHRGAAKRFKKTGTGKIKRSKAYASHLLGGKSPKRKRNLRKAG.

The protein belongs to the bacterial ribosomal protein bL35 family.

In Syntrophomonas wolfei subsp. wolfei (strain DSM 2245B / Goettingen), this protein is Large ribosomal subunit protein bL35.